The chain runs to 399 residues: Stearoyl-[acyl-carrier-protein] 9-desaturase, seed specific, chloroplastic (399 aa).

A chloroplast-targeting transit peptide spans 1 to 34; that stretch reads MALKFNPLVSQPYKLASSARPPVSTFRSPKFLCL. Glu-141, Glu-179, His-182, Glu-232, Glu-265, and His-268 together coordinate Fe cation.

This sequence belongs to the fatty acid desaturase type 2 family. As to quaternary structure, homodimer. The cofactor is Fe(2+). As to expression, developing seeds.

The protein resides in the plastid. It is found in the chloroplast. The catalysed reaction is octadecanoyl-[ACP] + 2 reduced [2Fe-2S]-[ferredoxin] + O2 + 2 H(+) = (9Z)-octadecenoyl-[ACP] + 2 oxidized [2Fe-2S]-[ferredoxin] + 2 H2O. The protein operates within lipid metabolism; fatty acid metabolism. Its function is as follows. Converts stearoyl-ACP to oleoyl-ACP by introduction of a cis double bond between carbons Delta(9) and Delta(10) of the acyl chain. This is Stearoyl-[acyl-carrier-protein] 9-desaturase, seed specific, chloroplastic from Brassica napus (Rape).